The primary structure comprises 428 residues: Glutamate-1-semialdehyde 2,1-aminomutase (428 aa).

Lysine 267 carries the post-translational modification N6-(pyridoxal phosphate)lysine.

The protein belongs to the class-III pyridoxal-phosphate-dependent aminotransferase family. HemL subfamily. Homodimer. It depends on pyridoxal 5'-phosphate as a cofactor.

The protein localises to the cytoplasm. It catalyses the reaction (S)-4-amino-5-oxopentanoate = 5-aminolevulinate. It participates in porphyrin-containing compound metabolism; protoporphyrin-IX biosynthesis; 5-aminolevulinate from L-glutamyl-tRNA(Glu): step 2/2. This Pelobacter propionicus (strain DSM 2379 / NBRC 103807 / OttBd1) protein is Glutamate-1-semialdehyde 2,1-aminomutase.